The primary structure comprises 482 residues: MPLLDRVREYVVRHGMLEPGDRVIVAVSGGPDSLALTHVLYRLAPAWRLSLHLFHLDHGLRGEASRADAAFVADLARELSLPLTTVTLRPGELEAMRGSLEDNARRRRYAEMARLAAAIGAQRAATGHNRNDQAETVLMRLLRGSGSTGLAGIPPVRREGGLTIIRPLLGASRQEILAYCRAHGLTPRMDATNLQGDFERNRIRLEILPALTERFGDAVVDNLAQTADLLREEDRLLAELTREACARCGWRETGEATGEPVVELDGTLLVQEPLALARRIVRMAVQRVSGSAYGPGLSAVTRALELAGRTEGSHWLDLPQGVRLSVAYGRCRFARSHPQLGPGAEALEQVWPVAVPGETAIPALGVTVAAELVPPSAMPARLPDDEMWLDRDRLPGPLAVRTRRPGDRLWPAGMQGSKKLQDILVDAKVPRDQRDGLPLLVAGDTVVWVPGVIRDRRFRPDAGTRSAVRVTVRRRPEGSGGD.

Residue 28-33 (SGGPDS) coordinates ATP.

Belongs to the tRNA(Ile)-lysidine synthase family.

The protein resides in the cytoplasm. The enzyme catalyses cytidine(34) in tRNA(Ile2) + L-lysine + ATP = lysidine(34) in tRNA(Ile2) + AMP + diphosphate + H(+). Functionally, ligates lysine onto the cytidine present at position 34 of the AUA codon-specific tRNA(Ile) that contains the anticodon CAU, in an ATP-dependent manner. Cytidine is converted to lysidine, thus changing the amino acid specificity of the tRNA from methionine to isoleucine. This is tRNA(Ile)-lysidine synthase from Symbiobacterium thermophilum (strain DSM 24528 / JCM 14929 / IAM 14863 / T).